Here is a 63-residue protein sequence, read N- to C-terminus: Cytochrome c oxidase subunit 5C (63 aa).

Residues 16-34 (VVKEICIGLTLGLVAGGLW) traverse the membrane as a helical segment.

It belongs to the cytochrome c oxidase subunit 5C family.

The protein resides in the mitochondrion inner membrane. In terms of biological role, this protein is one of the nuclear-coded polypeptide chains of cytochrome c oxidase, the terminal oxidase in mitochondrial electron transport. This Oryza sativa subsp. japonica (Rice) protein is Cytochrome c oxidase subunit 5C (COX5C).